Reading from the N-terminus, the 116-residue chain is Iron-sulfur cluster insertion protein ErpA (116 aa).

Positions 44, 108, and 110 each coordinate iron-sulfur cluster.

The protein belongs to the HesB/IscA family. In terms of assembly, homodimer. Requires iron-sulfur cluster as cofactor.

In terms of biological role, required for insertion of 4Fe-4S clusters for at least IspG. In Pseudomonas syringae pv. syringae (strain B728a), this protein is Iron-sulfur cluster insertion protein ErpA.